Here is a 548-residue protein sequence, read N- to C-terminus: Chaperonin GroEL (548 aa).

Residues 30–33 (TLGP), Lys-51, 87–91 (DGTTT), Gly-415, 479–481 (NAA), and Asp-495 contribute to the ATP site.

It belongs to the chaperonin (HSP60) family. As to quaternary structure, forms a cylinder of 14 subunits composed of two heptameric rings stacked back-to-back. Interacts with the co-chaperonin GroES.

The protein localises to the cytoplasm. It carries out the reaction ATP + H2O + a folded polypeptide = ADP + phosphate + an unfolded polypeptide.. Together with its co-chaperonin GroES, plays an essential role in assisting protein folding. The GroEL-GroES system forms a nano-cage that allows encapsulation of the non-native substrate proteins and provides a physical environment optimized to promote and accelerate protein folding. The polypeptide is Chaperonin GroEL (Sodalis glossinidius (strain morsitans)).